Reading from the N-terminus, the 85-residue chain is 4-hydroxyphenylacetate decarboxylase small subunit (85 aa).

Positions 4, 7, 20, 34, 43, 46, 60, and 78 each coordinate [4Fe-4S] cluster.

It belongs to the HPA decarboxylase small subunit family. In terms of assembly, heterooctamer consisting of 4 large (HpdB) subunits and 4 small (HpdC) subunits, arranged as a tetramer of heterodimers. The cofactor is [4Fe-4S] cluster.

The catalysed reaction is 4-hydroxyphenylacetate + H(+) = 4-methylphenol + CO2. The enzyme catalyses 3,4-dihydroxyphenylacetate + H(+) = 4-methylcatechol + CO2. In terms of biological role, component of the HPA decarboxylase that decarboxylates phenylacetates with a hydroxyl group in the p-position. Active toward 4-hydroxyphenylacetate and 3,4-dihydroxyphenylacetate, forming 4-methylphenol and 4-methylcatechol, respectively. Is likely involved in the catabolism of aromatic amino acids such as tyrosine fermentation. 4-methylphenol (p-cresol) formation provides metabolic toxicity, which allows an active suppression of other microbes and may provide growth advantages for the producers in highly competitive environments. The small subunit is essential for enzymatic activity of HPA decarboxylase, and also seems to be involved in the regulation of the enzyme oligomeric state and catalytic activity. This Clostridioides difficile (strain 630) (Peptoclostridium difficile) protein is 4-hydroxyphenylacetate decarboxylase small subunit.